The primary structure comprises 364 residues: DNA polymerase IV (364 aa).

A UmuC domain is found at 6 to 194 (VFHIDFDYFY…LKIRDIPGIG (189 aa)). 2 residues coordinate Mg(2+): Asp-10 and Asp-111. Glu-112 is a catalytic residue.

It belongs to the DNA polymerase type-Y family. Monomer. Mg(2+) is required as a cofactor.

Its subcellular location is the cytoplasm. It carries out the reaction DNA(n) + a 2'-deoxyribonucleoside 5'-triphosphate = DNA(n+1) + diphosphate. Its function is as follows. Poorly processive, error-prone DNA polymerase involved in untargeted mutagenesis. Copies undamaged DNA at stalled replication forks, which arise in vivo from mismatched or misaligned primer ends. These misaligned primers can be extended by PolIV. Exhibits no 3'-5' exonuclease (proofreading) activity. May be involved in translesional synthesis. This Nitrosopumilus maritimus (strain SCM1) protein is DNA polymerase IV.